The primary structure comprises 329 residues: uncharacterized protein (329 aa).

Residues 38-184 (IVKLILKSQE…MACLMRAKNF (147 aa)) enclose the SIS domain. 56-61 (GVGKSA) is a binding site for ATP. 2 consecutive CBS domains span residues 211 to 267 (QTTN…GLSL) and 276 to 329 (TLKP…GLKA).

Belongs to the SIS family. GutQ/KpsF subfamily.

This is an uncharacterized protein from Helicobacter pylori (strain J99 / ATCC 700824) (Campylobacter pylori J99).